A 338-amino-acid polypeptide reads, in one-letter code: tRNA N6-adenosine threonylcarbamoyltransferase (338 aa).

2 residues coordinate Fe cation: His-111 and His-115. Residues 134-138 (LVSGG), Asp-167, Gly-180, and Asn-272 contribute to the substrate site. Asp-300 provides a ligand contact to Fe cation.

The protein belongs to the KAE1 / TsaD family. Fe(2+) serves as cofactor.

The protein localises to the cytoplasm. It carries out the reaction L-threonylcarbamoyladenylate + adenosine(37) in tRNA = N(6)-L-threonylcarbamoyladenosine(37) in tRNA + AMP + H(+). Its function is as follows. Required for the formation of a threonylcarbamoyl group on adenosine at position 37 (t(6)A37) in tRNAs that read codons beginning with adenine. Is involved in the transfer of the threonylcarbamoyl moiety of threonylcarbamoyl-AMP (TC-AMP) to the N6 group of A37, together with TsaE and TsaB. TsaD likely plays a direct catalytic role in this reaction. This chain is tRNA N6-adenosine threonylcarbamoyltransferase, found in Shewanella putrefaciens (strain CN-32 / ATCC BAA-453).